We begin with the raw amino-acid sequence, 238 residues long: UPF0280 protein Msm_0088 (238 aa).

It belongs to the UPF0280 family.

This Methanobrevibacter smithii (strain ATCC 35061 / DSM 861 / OCM 144 / PS) protein is UPF0280 protein Msm_0088.